The primary structure comprises 530 residues: UDP-glucuronosyltransferase 2B15 (530 aa).

Residues M1 to C23 form the signal peptide. N-linked (GlcNAc...) asparagine glycosylation occurs at N65. N6-succinyllysine is present on K136. 2 N-linked (GlcNAc...) asparagine glycosylation sites follow: N316 and N483. A helical membrane pass occupies residues I495–F515.

Belongs to the UDP-glycosyltransferase family. As to expression, expressed in many tissues. Present in liver, prostate and testis.

Its subcellular location is the endoplasmic reticulum membrane. It catalyses the reaction glucuronate acceptor + UDP-alpha-D-glucuronate = acceptor beta-D-glucuronoside + UDP + H(+). The enzyme catalyses 17alpha-estradiol + UDP-alpha-D-glucuronate = 17alpha-estradiol 3-O-(beta-D-glucuronate) + UDP + H(+). It carries out the reaction 16alpha,17alpha-estriol + UDP-alpha-D-glucuronate = 16alpha,17alpha-estriol 3-O-(beta-D-glucuronate) + UDP + H(+). The catalysed reaction is 17beta-hydroxy-5alpha-androstan-3-one + UDP-alpha-D-glucuronate = 5alpha-dihydrotestosterone 17-O-(beta-D-glucuronate) + UDP + H(+). Its function is as follows. UDP-glucuronosyltransferase (UGT) that catalyzes phase II biotransformation reactions in which lipophilic substrates are conjugated with glucuronic acid to increase the metabolite's water solubility, thereby facilitating excretion into either the urine or bile. Essential for the elimination and detoxification of drugs, xenobiotics and endogenous compounds. Catalyzes the glucuronidation of endogenous steroid hormones such as androgens (testosterone, androsterone) and estrogens (estradiol, epiestradiol, estriol, catechol estrogens). Displays glucuronidation activity toward several classes of xenobiotic substrates, including phenolic compounds (eugenol, 4-nitrophenol, 4-hydroxybiphenyl) and phenylpropanoids (naringenin, coumarins). Catalyzes the glucuronidation of monoterpenoid alcohols such as borneol, menthol and isomenthol, a class of natural compounds used in essential oils. This is UDP-glucuronosyltransferase 2B15 from Homo sapiens (Human).